The following is a 1145-amino-acid chain: Cellulose synthase-like protein D3 (1145 aa).

A compositionally biased stretch (polar residues) spans 1–19; that stretch reads MASNNHFMNSRSNLSTNSD. 2 disordered regions span residues 1-38 and 189-208; these read MASN…TFAR and DNNK…SKMD. The next 2 membrane-spanning stretches (helical) occupy residues 289-309 and 319-339; these read VISP…LFLM and AIWL…SWLL. Residue Asp-419 is part of the active site. Ser-755 bears the Phosphoserine mark. Asp-848 is an active-site residue. 6 consecutive transmembrane segments (helical) span residues 930–950, 956–976, 1002–1022, 1045–1065, 1079–1099, and 1109–1129; these read FFLI…QFIV, TFLV…LLEI, LAAV…SFTL, SLMI…AVGF, LIGG…FAKG, and TIVY…WVAI.

The protein belongs to the glycosyltransferase 2 family. Plant cellulose synthase-like D subfamily. Preferentially expressed in root hair cells. Expressed in roots, leaves, stems, flowers and siliques.

The protein resides in the golgi apparatus membrane. Its function is as follows. Thought to be a Golgi-localized beta-glycan synthase that polymerize the backbones of noncellulosic polysaccharides (hemicelluloses) of plant cell wall. Required for synthesis of a cell wall polysaccharide essential for root hair elongation, but not initiation. May be the functional ortholog of rice CSLD1. This is Cellulose synthase-like protein D3 (CSLD3) from Arabidopsis thaliana (Mouse-ear cress).